A 104-amino-acid polypeptide reads, in one-letter code: Small ribosomal subunit protein bS6 (104 aa).

It belongs to the bacterial ribosomal protein bS6 family.

In terms of biological role, binds together with bS18 to 16S ribosomal RNA. This Elusimicrobium minutum (strain Pei191) protein is Small ribosomal subunit protein bS6.